A 376-amino-acid polypeptide reads, in one-letter code: MTPNDDDDTKVITFSSDYPDTDYRFLEANQEILDQIKNNKKLVIKGSLTDEAVLCTDDKTFTIRAGHTSNSMLLVSKDTNKIKVALQYHLELTEIQPKLNVLKDLLYSKAIDNSLDFEDDENLLGFSFDEIIDRIQSSEKEIQQYLLKLNTLIYKNRYIVLSENYEFKILELILSEATIGAWKLDNIPIDKCIENIRAPEFIIKHCLQLYSKQKSPTNSGGGGEEIKGGGGDDNNDENICSLDFNKVCIFRAKQLLTLSNKSNMKFEDFMDNWKDTLPIEIQPNFSMLKGIAILIPSSSTNPKEKSVKFINESILPTIPKARFKELFQISTRWSIDDIEPFIKSTIPPGNSLEQFILTYSRPITTSTGEKMIVTRF.

The tract at residues 213–232 is disordered; it reads QKSPTNSGGGGEEIKGGGGD. Gly residues predominate over residues 219 to 232; sequence SGGGGEEIKGGGGD.

Belongs to the DCC1 family.

It is found in the nucleus. Loads PCNA onto primed templates regulating velocity, spacing and restart activity of replication forks. May couple DNA replication to sister chromatid cohesion. This is Probable sister chromatid cohesion protein DCC1 from Dictyostelium discoideum (Social amoeba).